We begin with the raw amino-acid sequence, 398 residues long: Ornithine aminotransferase (398 aa).

At K256 the chain carries N6-(pyridoxal phosphate)lysine.

It belongs to the class-III pyridoxal-phosphate-dependent aminotransferase family. OAT subfamily. The cofactor is pyridoxal 5'-phosphate.

Its subcellular location is the cytoplasm. It carries out the reaction a 2-oxocarboxylate + L-ornithine = L-glutamate 5-semialdehyde + an L-alpha-amino acid. The protein operates within amino-acid biosynthesis; L-proline biosynthesis; L-glutamate 5-semialdehyde from L-ornithine: step 1/1. In terms of biological role, catalyzes the interconversion of ornithine to glutamate semialdehyde. The polypeptide is Ornithine aminotransferase (Oceanobacillus iheyensis (strain DSM 14371 / CIP 107618 / JCM 11309 / KCTC 3954 / HTE831)).